A 1978-amino-acid chain; its full sequence is Centrosomal protein Cep290 (1978 aa).

The tract at residues 1 to 650 is necessary and sufficient for function in ciliogenesis, transition zone (TZ) assembly, and recruitment of DZP1 and Mks1 to the TZ. Also required for subcellular localization to the cilium basal body; sequence MSMDIPETVS…SLCEVPEIAE (650 aa). Coiled coils occupy residues 76–384 and 471–505; these read DRRL…KSQQ and IERL…LQQD. The disordered stretch occupies residues 271-296; sequence QLEGKSISSGQTNSSNSQSQQEEEHA. Residues 276–290 show a composition bias toward low complexity; it reads SISSGQTNSSNSQSQ. Residues 663-688 are disordered; that stretch reads ATRPSSPTEATMGLRRPTVPDPEEKP. Coiled coils occupy residues 853 to 887, 922 to 970, and 1192 to 1233; these read FEEQ…ANEQ, LAKV…TQQD, and ADAV…SRSE. Residues 1313–1324 are compositionally biased toward basic and acidic residues; sequence KEKLRQKPEVPV. The tract at residues 1313–1397 is disordered; it reads KEKLRQKPEV…EKQDTEELKE (85 aa). Positions 1329 to 1341 are enriched in low complexity; it reads STDSRSSSSSDSS. The span at 1379-1391 shows a compositional bias: acidic residues; it reads VTEEPEGEEEKQD. 2 coiled-coil regions span residues 1405-1439 and 1501-1654; these read IKDL…CQER and LNRT…LESK. 2 disordered regions span residues 1684-1714 and 1859-1884; these read VGVS…AHHH and LKDG…RLQQ. Over residues 1693 to 1708 the composition is skewed to polar residues; sequence PSESPETYTGPSSECS. Residues 1726 to 1935 are a coiled coil; it reads IEALKSRIEL…KEQLVKKTQL (210 aa).

As to quaternary structure, interacts (via N-terminus) with DZIP1. Expressed in sensory neurons type I and in germ cells (at protein level).

Its subcellular location is the cytoplasm. The protein resides in the cytoskeleton. The protein localises to the cilium basal body. It localises to the microtubule organizing center. It is found in the centrosome. Its subcellular location is the centriole. Its function is as follows. Essential for ciliogenesis in sensory neurons and spermatocytes. During neuron and spermatocyte ciliogenesis, essential for initiating transition zone (TZ) assembly and is required for the formation of diverse connections between microtubules and between microtubules and the membrane. Regulates TZ assembly by recruiting DZIP1 to the plasma membrane where it promotes early ciliary membrane formation resulting in the initiation of TZ assembly. The protein is Centrosomal protein Cep290 of Drosophila melanogaster (Fruit fly).